We begin with the raw amino-acid sequence, 179 residues long: Large ribosomal subunit protein uL5 (179 aa).

The protein belongs to the universal ribosomal protein uL5 family. In terms of assembly, part of the 50S ribosomal subunit; part of the 5S rRNA/L5/L18/L25 subcomplex. Contacts the 5S rRNA and the P site tRNA. Forms a bridge to the 30S subunit in the 70S ribosome.

Functionally, this is one of the proteins that bind and probably mediate the attachment of the 5S RNA into the large ribosomal subunit, where it forms part of the central protuberance. In the 70S ribosome it contacts protein S13 of the 30S subunit (bridge B1b), connecting the 2 subunits; this bridge is implicated in subunit movement. Contacts the P site tRNA; the 5S rRNA and some of its associated proteins might help stabilize positioning of ribosome-bound tRNAs. This Burkholderia cenocepacia (strain HI2424) protein is Large ribosomal subunit protein uL5.